A 335-amino-acid polypeptide reads, in one-letter code: MAASLGFRGAASGLWYWSGRRRPVGSLAAVCSRSMASKTPVGFIGLGNMGNPMAKNLMKHGYPLILYDVFPDVCKEFKEAGEQVASSPAEVAEKADRIITMLPSSMNAVEVYSGANGILKKVKKGSLLIDSSTIDPSVSKELAKEVEKMGAVFMDAPVSGGVGAARSGNLTFMVGGVEDEFAAAQELLECMGSNVVYCGAVGTGQSAKICNNMLLAISMIGTAEAMNLGIRSGLDPKLLAKILNMSSGRCWSSDTYNPVPGVMHGVPSSNNYQGGFGTTLMAKDLGLAQDSATSTKTPILLGSLAHQIYRMMCSKGYSKKDFSSVFQYLREEEPF.

Residues 1 to 35 constitute a mitochondrion transit peptide; it reads MAASLGFRGAASGLWYWSGRRRPVGSLAAVCSRSM. 39–68 contacts NAD(+); it reads TPVGFIGLGNMGNPMAKNLMKHGYPLILYD. N6-acetyllysine; alternate occurs at positions 59, 75, and 78. N6-succinyllysine; alternate is present on residues Lys-59, Lys-75, and Lys-78. Position 94 is an N6-succinyllysine (Lys-94). NAD(+) contacts are provided by residues 102 to 103 and Asn-107; that span reads LP. N6-acetyllysine is present on Lys-120. Residue Thr-133 participates in NAD(+) binding. N6-succinyllysine is present on Lys-140. Lys-144 is subject to N6-acetyllysine. At Lys-148 the chain carries N6-acetyllysine; alternate. Lys-148 carries the post-translational modification N6-succinyllysine; alternate. Residue Lys-208 is part of the active site. N6-acetyllysine; alternate occurs at positions 237 and 241. N6-succinyllysine; alternate occurs at positions 237 and 241. Lys-283 lines the NAD(+) pocket. An N6-succinyllysine modification is found at Lys-296. At Lys-320 the chain carries N6-acetyllysine; alternate. Lys-320 carries the N6-succinyllysine; alternate modification.

It belongs to the HIBADH-related family. 3-hydroxyisobutyrate dehydrogenase subfamily. As to quaternary structure, homodimer.

The protein localises to the mitochondrion. The enzyme catalyses 3-hydroxy-2-methylpropanoate + NAD(+) = 2-methyl-3-oxopropanoate + NADH + H(+). Its pathway is amino-acid degradation; L-valine degradation. This Mus musculus (Mouse) protein is 3-hydroxyisobutyrate dehydrogenase, mitochondrial (Hibadh).